We begin with the raw amino-acid sequence, 776 residues long: Conserved oligomeric Golgi complex subunit 4 (776 aa).

A phosphoserine mark is found at serine 342 and serine 345.

Belongs to the COG4 family. Component of the conserved oligomeric Golgi complex which is composed of eight different subunits and is required for normal Golgi morphology and localization.

It localises to the golgi apparatus membrane. Its function is as follows. Required for normal Golgi function. This is Conserved oligomeric Golgi complex subunit 4 from Drosophila melanogaster (Fruit fly).